The chain runs to 558 residues: MYENNKTLYLPYAGPTLLENALLNKGSAFSPEERQNFSLMGLLPAAIESITEQEERAYSQYQTFNDDMDKHIYLRNIQDTNETLYYRLIDNHIEEMMPIIYTPTVGAACEQFSNIYRRGRGLFLGYPDKGNIVDILNNAARQDVKIIVITDGERILGLGDQGIGGMGIPIGKLALYTACGGINPANTLPIVLDVGTNNTQLLSDPMYMGWRHPRITGQEYDDFVEEFIQAVKSRWPNALIQFEDFAQKNAMPLLNRYKDKVCCFNDDIQGTAAVTVGSLLAACKAAGSELSEQRITFVGAGSAGCGIAEAIVAQMIAEGLSDSAARARIFMVDRWGLLTDNMQNLLDFQQKLAQKSATVSQWNETGNISLLDVVSNGKPTVLIGVPGLFSQEVIMEMHAHCKRPIVLPLSNPTSRVEATPSDIIRWTEGDALIATGSPFDPVIFNEKTYPIAQCNNSYIFPGIGLGVLASGATRVTDEMLMESSRVLAECSPLAQNGNGALLPPLKDIHQVSHCIALAVAKKAVEQNKAPQRTEKQLLEKIESYFWKPEYLKYKRTAL.

Tyrosine 101 serves as the catalytic Proton donor. Arginine 154 lines the NAD(+) pocket. Residue lysine 172 is the Proton acceptor of the active site. A divalent metal cation-binding residues include glutamate 243, aspartate 244, and aspartate 267. Residues aspartate 267 and asparagine 411 each contribute to the NAD(+) site.

The protein belongs to the malic enzymes family. In terms of assembly, homotetramer. Mg(2+) is required as a cofactor. The cofactor is Mn(2+).

The enzyme catalyses (S)-malate + NAD(+) = pyruvate + CO2 + NADH. The catalysed reaction is oxaloacetate + H(+) = pyruvate + CO2. This Photobacterium profundum (strain SS9) protein is NAD-dependent malic enzyme 2.